Consider the following 189-residue polypeptide: Isopentenyl-diphosphate Delta-isomerase (189 aa).

Mn(2+) is bound by residues His-27 and His-34. The region spanning 32–171 is the Nudix hydrolase domain; sequence PLHFAFSTYI…PFVFSPWLVD (140 aa). Cys-69 is an active-site residue. Residue Cys-69 participates in Mg(2+) binding. A Mn(2+)-binding site is contributed by His-71. Glu-89 serves as a coordination point for Mg(2+). 2 residues coordinate Mn(2+): Glu-119 and Glu-121. Residue Glu-121 is part of the active site.

Belongs to the IPP isomerase type 1 family. Requires Mg(2+) as cofactor. Mn(2+) serves as cofactor.

The protein localises to the cytoplasm. It carries out the reaction isopentenyl diphosphate = dimethylallyl diphosphate. Its pathway is isoprenoid biosynthesis; dimethylallyl diphosphate biosynthesis; dimethylallyl diphosphate from isopentenyl diphosphate: step 1/1. Functionally, catalyzes the 1,3-allylic rearrangement of the homoallylic substrate isopentenyl (IPP) to its highly electrophilic allylic isomer, dimethylallyl diphosphate (DMAPP). This chain is Isopentenyl-diphosphate Delta-isomerase, found in Corynebacterium glutamicum (strain ATCC 13032 / DSM 20300 / JCM 1318 / BCRC 11384 / CCUG 27702 / LMG 3730 / NBRC 12168 / NCIMB 10025 / NRRL B-2784 / 534).